The sequence spans 583 residues: Alpha-1,3-arabinosyltransferase XAT2 (583 aa).

At 1-21 the chain is on the cytoplasmic side; the sequence is MKPVERAKLVRSLRQESRRLR. The helical; Signal-anchor for type II membrane protein transmembrane segment at 22–42 threads the bilayer; that stretch reads LLVLVIGFFLVTLTFVVISKP. At 43-583 the chain is on the lumenal side; that stretch reads DALLFNLNGR…LLEVLDQLNQ (541 aa). A disordered region spans residues 73-178; the sequence is RRSADTFPAA…NGKQEDGKPN (106 aa). Composition is skewed to basic and acidic residues over residues 102 to 121 and 135 to 146; these read TSEE…KNEE and EDNKNGEEEGHT. Residues 149 to 160 show a composition bias toward polar residues; it reads SKVTLPTVSNYT. N-linked (GlcNAc...) asparagine glycosylation occurs at N158. Positions 162–178 are enriched in basic and acidic residues; it reads RDAEDTDNGKQEDGKPN. Residues N229, N382, N450, and N485 are each glycosylated (N-linked (GlcNAc...) asparagine).

This sequence belongs to the glycosyltransferase 61 family.

It localises to the golgi apparatus membrane. It functions in the pathway glycan metabolism. Functionally, glycosyltransferase involved in the arabinosylation of xylan, the major hemicellulose (non-cellulosic component) of primary and secondary walls of angiosperms. Possesses alpha-1,3-arabinosyltransferase activity, transferring an arabinofuranose residue to the xylan backbone. The sequence is that of Alpha-1,3-arabinosyltransferase XAT2 from Oryza sativa subsp. japonica (Rice).